Here is a 262-residue protein sequence, read N- to C-terminus: Ornithine carbamoyltransferase (262 aa).

Residues 3–7 (STRTR), glutamine 30, arginine 54, and 81–84 (HPTQ) each bind carbamoyl phosphate. Residues asparagine 114, aspartate 178, and 182–183 (SM) each bind L-ornithine. Carbamoyl phosphate contacts are provided by residues 219–222 (HCLP) and threonine 247.

This sequence belongs to the aspartate/ornithine carbamoyltransferase superfamily. OTCase family.

Its subcellular location is the cytoplasm. It carries out the reaction carbamoyl phosphate + L-ornithine = L-citrulline + phosphate + H(+). It participates in amino-acid biosynthesis; L-arginine biosynthesis; L-arginine from L-ornithine and carbamoyl phosphate: step 1/3. Functionally, reversibly catalyzes the transfer of the carbamoyl group from carbamoyl phosphate (CP) to the N(epsilon) atom of ornithine (ORN) to produce L-citrulline. The polypeptide is Ornithine carbamoyltransferase (argF) (Neisseria mucosa).